The sequence spans 311 residues: Giardin subunit alpha-8 (311 aa).

Annexin repeat units follow at residues 5–73 (RKAY…IRCW), 75–146 (NRHE…DRWM), 154–223 (NNVK…AAHY), and 227–295 (EPSK…SLWR).

It belongs to the annexin family. Giardin subunit alpha subfamily.

The protein localises to the cytoplasm. The protein resides in the cytoskeleton. Its function is as follows. Giardins are involved in parasite attachment to the intestinal mucosa and in the cytoskeletal disassembly and reassembly that marks the transition from infectious trophozoite to transmissible cyst. They may interact with other cytoskeletal proteins such as microtubules in the microribbons or crossbridges, to maintain the integrity of the ventral disk. In Giardia intestinalis (Giardia lamblia), this protein is Giardin subunit alpha-8.